Reading from the N-terminus, the 362-residue chain is Adenosine deaminase (362 aa).

Positions 19 and 21 each coordinate Zn(2+). Substrate contacts are provided by His-21, Asp-23, and Gly-181. Residue His-208 participates in Zn(2+) binding. Glu-211 acts as the Proton donor in catalysis. Asp-300 contacts Zn(2+).

Belongs to the metallo-dependent hydrolases superfamily. Adenosine and AMP deaminases family. Adenosine deaminase subfamily. The cofactor is Zn(2+).

It catalyses the reaction adenosine + H2O + H(+) = inosine + NH4(+). It carries out the reaction 2'-deoxyadenosine + H2O + H(+) = 2'-deoxyinosine + NH4(+). Catalyzes the hydrolytic deamination of adenosine and 2-deoxyadenosine. The polypeptide is Adenosine deaminase (Mycolicibacterium gilvum (strain PYR-GCK) (Mycobacterium gilvum (strain PYR-GCK))).